The following is a 265-amino-acid chain: 3-methyl-2-oxobutanoate hydroxymethyltransferase (265 aa).

Mg(2+) contacts are provided by aspartate 44 and aspartate 83. Residues 44-45, aspartate 83, and lysine 113 contribute to the 3-methyl-2-oxobutanoate site; that span reads DS. Glutamate 115 contributes to the Mg(2+) binding site. Catalysis depends on glutamate 183, which acts as the Proton acceptor.

The protein belongs to the PanB family. Homodecamer; pentamer of dimers. Mg(2+) is required as a cofactor.

The protein localises to the cytoplasm. It catalyses the reaction 3-methyl-2-oxobutanoate + (6R)-5,10-methylene-5,6,7,8-tetrahydrofolate + H2O = 2-dehydropantoate + (6S)-5,6,7,8-tetrahydrofolate. Its pathway is cofactor biosynthesis; (R)-pantothenate biosynthesis; (R)-pantoate from 3-methyl-2-oxobutanoate: step 1/2. In terms of biological role, catalyzes the reversible reaction in which hydroxymethyl group from 5,10-methylenetetrahydrofolate is transferred onto alpha-ketoisovalerate to form ketopantoate. This is 3-methyl-2-oxobutanoate hydroxymethyltransferase from Leptospira borgpetersenii serovar Hardjo-bovis (strain JB197).